The chain runs to 121 residues: Small ribosomal subunit protein bS6 (121 aa).

Belongs to the bacterial ribosomal protein bS6 family.

Functionally, binds together with bS18 to 16S ribosomal RNA. The sequence is that of Small ribosomal subunit protein bS6 from Rickettsia conorii (strain ATCC VR-613 / Malish 7).